The primary structure comprises 153 residues: UPF0235 protein C15orf40 (153 aa).

The span at 1–12 (MLRLRSGLRHLR) shows a compositional bias: basic residues. The tract at residues 1–55 (MLRLRSGLRHLRATPNTRGSARLLCAEMPKKAGATTKGKSQSKEPERPLPPLGPV) is disordered. Residue Ser-116 is modified to Phosphoserine.

Belongs to the UPF0235 family.

The chain is UPF0235 protein C15orf40 (C15orf40) from Homo sapiens (Human).